The primary structure comprises 349 residues: Ureidoglycolate dehydrogenase (NAD(+)) (349 aa).

Histidine 116 (proton acceptor) is an active-site residue. NAD(+) contacts are provided by residues serine 140, 174 to 176 (DMA), lysine 224, and 306 to 308 (GQD).

It belongs to the LDH2/MDH2 oxidoreductase family. In terms of assembly, homodimer.

It is found in the cytoplasm. The catalysed reaction is (S)-ureidoglycolate + NAD(+) = N-carbamoyl-2-oxoglycine + NADH + H(+). The protein operates within nitrogen metabolism; (S)-allantoin degradation; oxalurate from (S)-ureidoglycolate: step 1/1. Functionally, allD plays a pivotal role as a metabolic branch-point enzyme in nitrogen utilization via the assimilation of allantoin. It is able to utilize allantoin as a sole source of nitrogen under anaerobic conditions. Catalyzes the oxidation of ureidoglycolate to oxalurate. The polypeptide is Ureidoglycolate dehydrogenase (NAD(+)) (Escherichia coli O157:H7).